We begin with the raw amino-acid sequence, 238 residues long: TATA-box-binding protein (238 aa).

The interval 1–58 (MDLKLPPTNPTNPQQAKTFMKSIEEDEKNKAEDLDIIKKEDIDEPKQEDTTDGNGGGG) is disordered. Over residues 27–49 (EKNKAEDLDIIKKEDIDEPKQED) the composition is skewed to basic and acidic residues. A run of 2 repeats spans residues 65–141 (LQNI…ARII) and 155–232 (IQNI…YPVL).

This sequence belongs to the TBP family. Belongs to the TFIID complex together with the TBP-associated factors (TAFs). Binds DNA as monomer.

Its subcellular location is the nucleus. Functionally, general transcription factor that functions at the core of the DNA-binding multiprotein factor TFIID. Binding of TFIID to the TATA box is the initial transcriptional step of the pre-initiation complex (PIC), playing a role in the activation of eukaryotic genes transcribed by RNA polymerase II. This Candida albicans (strain SC5314 / ATCC MYA-2876) (Yeast) protein is TATA-box-binding protein (TBP1).